Reading from the N-terminus, the 954-residue chain is Isoleucine--tRNA ligase (954 aa).

The short motif at 58–68 (PYANGDIHIGH) is the 'HIGH' region element. Glutamate 572 contacts L-isoleucyl-5'-AMP. The 'KMSKS' region motif lies at 613–617 (KMSKS). An ATP-binding site is contributed by lysine 616. Residues cysteine 917, cysteine 920, cysteine 937, and cysteine 940 each coordinate Zn(2+).

This sequence belongs to the class-I aminoacyl-tRNA synthetase family. IleS type 1 subfamily. In terms of assembly, monomer. Zn(2+) is required as a cofactor.

The protein resides in the cytoplasm. It carries out the reaction tRNA(Ile) + L-isoleucine + ATP = L-isoleucyl-tRNA(Ile) + AMP + diphosphate. In terms of biological role, catalyzes the attachment of isoleucine to tRNA(Ile). As IleRS can inadvertently accommodate and process structurally similar amino acids such as valine, to avoid such errors it has two additional distinct tRNA(Ile)-dependent editing activities. One activity is designated as 'pretransfer' editing and involves the hydrolysis of activated Val-AMP. The other activity is designated 'posttransfer' editing and involves deacylation of mischarged Val-tRNA(Ile). The protein is Isoleucine--tRNA ligase of Photobacterium profundum (strain SS9).